The primary structure comprises 359 residues: Hyaluronan and proteoglycan link protein 3 (359 aa).

Positions 1–17 are cleaved as a signal peptide; the sequence is MSLLFLVLLSPFPCVLG. The region spanning 48 to 164 is the Ig-like V-type domain; the sequence is KLVVETTEES…ESGLVELELR (117 aa). 5 disulfide bridges follow: Cys-70–Cys-146, Cys-188–Cys-259, Cys-212–Cys-233, Cys-286–Cys-355, and Cys-311–Cys-332. 2 Link domains span residues 166–261 and 266–357; these read VVFP…FCFA and GRVY…YCYV.

This sequence belongs to the HAPLN family.

The protein localises to the secreted. It localises to the extracellular space. It is found in the extracellular matrix. May function in hyaluronic acid binding. This chain is Hyaluronan and proteoglycan link protein 3 (Hapln3), found in Mus musculus (Mouse).